The following is a 344-amino-acid chain: MLAKIEQLLQEIEGLQAANAEELEALRIKYLSKKGAINELMADFRNVPAEQKKEVGMKLNELKNKAQERIASLKEAFETQDNSAAEMDLTRTAYPIELGTRHPLSIVKNEIIDIFHRLGFSIADGPEIEDDLHVFTAMNFAEDHPARDMQDTFFIEANQEDVKKNIVLRTHTSSVQARAMEHSQPPIRIICPGRVYRNEAISYRAHAFFHQVEALYIDKNVSFTDLKQVLLLFAKEMFGEDTQIRLRPSYFPFTEPSAEMDISCNICGGKGCPFCKGTGWVEILGCGMVDPNVLEANGIDSKVYSGYALGMGIERITNLKYRVNDLRLFSENDTRFLKEFEAAN.

A Mg(2+)-binding site is contributed by Glu255.

This sequence belongs to the class-II aminoacyl-tRNA synthetase family. Phe-tRNA synthetase alpha subunit type 1 subfamily. Tetramer of two alpha and two beta subunits. Requires Mg(2+) as cofactor.

Its subcellular location is the cytoplasm. It catalyses the reaction tRNA(Phe) + L-phenylalanine + ATP = L-phenylalanyl-tRNA(Phe) + AMP + diphosphate + H(+). The sequence is that of Phenylalanine--tRNA ligase alpha subunit from Phocaeicola vulgatus (strain ATCC 8482 / DSM 1447 / JCM 5826 / CCUG 4940 / NBRC 14291 / NCTC 11154) (Bacteroides vulgatus).